A 431-amino-acid polypeptide reads, in one-letter code: Glutamate-1-semialdehyde 2,1-aminomutase (431 aa).

Lysine 265 carries the N6-(pyridoxal phosphate)lysine modification.

It belongs to the class-III pyridoxal-phosphate-dependent aminotransferase family. HemL subfamily. Homodimer. Pyridoxal 5'-phosphate is required as a cofactor.

The protein localises to the cytoplasm. It carries out the reaction (S)-4-amino-5-oxopentanoate = 5-aminolevulinate. Its pathway is porphyrin-containing compound metabolism; protoporphyrin-IX biosynthesis; 5-aminolevulinate from L-glutamyl-tRNA(Glu): step 2/2. The protein is Glutamate-1-semialdehyde 2,1-aminomutase of Pseudoalteromonas atlantica (strain T6c / ATCC BAA-1087).